Reading from the N-terminus, the 468-residue chain is 6-phospho-beta-galactosidase (468 aa).

Residues Gln19, His116, Asn159, Glu160, and Asn297 each coordinate D-galactose 6-phosphate. Glu160 serves as the catalytic Proton donor. The active-site Nucleophile is Glu375. D-galactose 6-phosphate contacts are provided by Ser428, Trp429, Lys435, and Tyr437.

Belongs to the glycosyl hydrolase 1 family.

The catalysed reaction is a 6-phospho-beta-D-galactoside + H2O = D-galactose 6-phosphate + an alcohol. Its pathway is carbohydrate metabolism; lactose degradation; D-galactose 6-phosphate and beta-D-glucose from lactose 6-phosphate: step 1/1. This is 6-phospho-beta-galactosidase from Streptococcus sanguinis (strain SK36).